Reading from the N-terminus, the 296-residue chain is MDVKTLVGEYYASLPSGVLREFVEDPSSREWAYTFLKGRDIVFTRKRRLDEVSGFLELYHSTGKFKNPKSWEGLLGWDLVIDVDAELPEEPEAFLKSLGRLLKDVVIACDELRRALGFPRPDVVNFSGSKGFHVRYFDSTVRRWLRWDLHERRGIKPGEIIQRVGRGVVWLAREGFVAGDRVRALREGLLDDSMYDLKRLIRCVGSMNVKSLLPAVPVWSREGGRWVDFRDEVLGMNDLELGCLVAHRTLTWPGRGGLGVVLSRVLDLDTDADPEDPSDFVEVWGNVMSVLGELKP.

Residues Asp82, Asp84, and Asp191 contribute to the active site.

It belongs to the eukaryotic-type primase small subunit family. As to quaternary structure, heterodimer of a small subunit (PriS) and a large subunit (PriL). The cofactor is Mg(2+). It depends on Mn(2+) as a cofactor.

Catalytic subunit of DNA primase, an RNA polymerase that catalyzes the synthesis of short RNA molecules used as primers for DNA polymerase during DNA replication. The small subunit contains the primase catalytic core and has DNA synthesis activity on its own. Binding to the large subunit stabilizes and modulates the activity, increasing the rate of DNA synthesis while decreasing the length of the DNA fragments, and conferring RNA synthesis capability. The DNA polymerase activity may enable DNA primase to also catalyze primer extension after primer synthesis. May also play a role in DNA repair. This is DNA primase small subunit PriS from Methanopyrus kandleri (strain AV19 / DSM 6324 / JCM 9639 / NBRC 100938).